A 57-amino-acid chain; its full sequence is Large ribosomal subunit protein bL32 (57 aa).

It belongs to the bacterial ribosomal protein bL32 family.

In Shouchella clausii (strain KSM-K16) (Alkalihalobacillus clausii), this protein is Large ribosomal subunit protein bL32.